Consider the following 395-residue polypeptide: Elongation factor Tu (395 aa).

The tr-type G domain maps to Lys-10–Gln-204. The G1 stretch occupies residues Gly-19–Thr-26. Gly-19–Thr-26 contributes to the GTP binding site. Mg(2+) is bound at residue Thr-26. A G2 region spans residues Gly-60–Asn-64. The interval Asp-81 to Gly-84 is G3. Residues Asp-81–His-85 and Asn-136–Asp-139 each bind GTP. Residues Asn-136 to Asp-139 are G4. Positions Ser-174 to Leu-176 are G5.

This sequence belongs to the TRAFAC class translation factor GTPase superfamily. Classic translation factor GTPase family. EF-Tu/EF-1A subfamily. Monomer.

Its subcellular location is the cytoplasm. The enzyme catalyses GTP + H2O = GDP + phosphate + H(+). In terms of biological role, GTP hydrolase that promotes the GTP-dependent binding of aminoacyl-tRNA to the A-site of ribosomes during protein biosynthesis. The polypeptide is Elongation factor Tu (Symbiobacterium thermophilum (strain DSM 24528 / JCM 14929 / IAM 14863 / T)).